Here is an 872-residue protein sequence, read N- to C-terminus: Potassium voltage-gated channel subfamily KQT member 3 (872 aa).

The segment at 1 to 43 (MGLKARRAAGAAGGGGDGGGGGGGAANPAGGDAAAAGDEERKV) is disordered. Topologically, residues 1–120 (MGLKARRAAG…IYDALERPRG (120 aa)) are cytoplasmic. The segment covering 11-25 (AAGGGGDGGGGGGGA) has biased composition (gly residues). Low complexity predominate over residues 26-36 (ANPAGGDAAAA). The residue at position 81 (threonine 81) is a Phosphothreonine. A helical transmembrane segment spans residues 121–143 (WALLYHALVFLIVLGCLILAVLT). Over 144–153 (TFKEYETVSG) the chain is Extracellular. A helical membrane pass occupies residues 154–175 (DWLLLLETFAIFIFGAEFALRI). The Cytoplasmic portion of the chain corresponds to 176-193 (WAAGCCCRYKGWRGRLKF). Residues 194–213 (ARKPLCMLDIFVLIASVPVV) traverse the membrane as a helical segment. The Extracellular portion of the chain corresponds to 214–225 (AVGNQGNVLATS). The chain crosses the membrane as a helical; Voltage-sensor span at residues 226-244 (LRSLRFLQILRMLRMDRRG). Position 243 (arginine 243) interacts with a 1,2-diacyl-sn-glycero-3-phospho-(1D-myo-inositol-4,5-bisphosphate). At 245–256 (GTWKLLGSAICA) the chain is on the cytoplasmic side. Phosphothreonine is present on threonine 246. Residues 257–282 (HSKELITAWYIGFLTLILSSFLVYLV) traverse the membrane as a helical segment. Residue lysine 259 coordinates a 1,2-diacyl-sn-glycero-3-phospho-(1D-myo-inositol-4,5-bisphosphate). Residues 283 to 302 (EKDVPEVDAQGEEMKEEFET) are Extracellular-facing. The segment at residues 303–315 (YADALWWGLITLA) is an intramembrane region (pore-forming). The Selectivity filter signature appears at 316 to 321 (TIGYGD). At 316-326 (TIGYGDKTPKT) the chain is on the extracellular side. The helical transmembrane segment at 327–353 (WEGRLIAATFSLIGVSFFALPAGILGS) threads the bilayer. Residues 354–872 (GLALKVQEQH…SVWTPSNKPI (519 aa)) are Cytoplasmic-facing. The tract at residues 356 to 537 (ALKVQEQHRQ…RLYKKKFKET (182 aa)) is mediates interaction with calmodulin. Lysine 366 contributes to the a 1,2-diacyl-sn-glycero-3-phospho-(1D-myo-inositol-4,5-bisphosphate) binding site. 2 disordered regions span residues 575 to 611 (GPPS…PSTS) and 764 to 872 (ADLQ…NKPI). 2 stretches are compositionally biased toward polar residues: residues 587–600 (KGSA…QSPR) and 843–872 (DPFT…NKPI).

This sequence belongs to the potassium channel family. KQT (TC 1.A.1.15) subfamily. Kv7.3/KCNQ3 sub-subfamily. As to quaternary structure, heterotetramer with KCNQ2; forms heterotetrameric native M-channel responsible for the M-current. Interacts with calmodulin; the interaction is calcium-independent, constitutive and participates in the proper assembly of a functional M-channel. Heteromultimer with KCNQ5. May associate with KCNE2. Interacts with IQCJ-SCHIP1. Interacts (via the pore module) with SLC5A3/SMIT1; forms a coregulatory complex that alters ion selectivity, voltage dependence and gating kinetics of the channel. Post-translationally, KCNQ2/KCNQ3 are ubiquitinated by NEDD4L. Ubiquitination leads to protein degradation. Degradation induced by NEDD4L is inhibited by USP36. As to expression, predominantly expressed in brain.

It is found in the cell membrane. It carries out the reaction K(+)(in) = K(+)(out). It catalyses the reaction Rb(+)(in) = Rb(+)(out). The enzyme catalyses Cs(+)(in) = Cs(+)(out). The catalysed reaction is Na(+)(in) = Na(+)(out). Phosphatidylinositol-4,5-bisphosphate (PIP2) potentiates the activation of KCNQ channels by enhancing the electro-mechanical coupling of the voltage-sensing domain (VSD) and the pore-forming domain (PD). In the closed state of the channel, PIP2 is anchored at the S2-S3 loop; upon channel activation, PIP2 interacts with the S4-S5 linker and is involved in channel gating. Calcium suppresses KCNQ2-KCNQ3 channel currents, with calcium-bound calmodulin inducing a change in channel configuration which leads to the reduction of channel affinity for PIP2 and subsequent current suppression. M-channel is activated by the anticonvulsant retigabine. Pore-forming subunit of the voltage-gated potassium (Kv) M-channel which is responsible for the M-current, a key controller of neuronal excitability. M-channel is composed of pore-forming subunits KCNQ2 and KCNQ3 assembled as heterotetramers. The native M-current has a slowly activating and deactivating potassium conductance which plays a critical role in determining the subthreshold electrical excitability of neurons as well as the responsiveness to synaptic inputs. M-channel is selectively permeable in vitro to other cations besides potassium, in decreasing order of affinity K(+) &gt; Rb(+) &gt; Cs(+) &gt; Na(+). M-channel association with SLC5A3/SMIT1 alters channel ion selectivity, increasing Na(+) and Cs(+) permeation relative to K(+). Suppressed by activation of M1 muscarinic acetylcholine receptors. KCNQ3 also associates with KCNQ5 to form a functional channel in vitro and may also contribute to the M-current in brain. In Homo sapiens (Human), this protein is Potassium voltage-gated channel subfamily KQT member 3.